Reading from the N-terminus, the 298-residue chain is Diphthine methyl ester synthase (298 aa).

S-adenosyl-L-methionine contacts are provided by residues Leu-9, Asp-85, Gly-88, 113–114 (SV), Leu-164, Leu-222, and His-247.

The protein belongs to the diphthine synthase family.

Its subcellular location is the cytoplasm. The catalysed reaction is 2-[(3S)-amino-3-carboxypropyl]-L-histidyl-[translation elongation factor 2] + 4 S-adenosyl-L-methionine = diphthine methyl ester-[translation elongation factor 2] + 4 S-adenosyl-L-homocysteine + 3 H(+). The protein operates within protein modification; peptidyl-diphthamide biosynthesis. Its function is as follows. S-adenosyl-L-methionine-dependent methyltransferase that catalyzes four methylations of the modified target histidine residue in translation elongation factor 2 (EF-2), to form an intermediate called diphthine methyl ester. The four successive methylation reactions represent the second step of diphthamide biosynthesis. The chain is Diphthine methyl ester synthase (DPH5) from Candida glabrata (strain ATCC 2001 / BCRC 20586 / JCM 3761 / NBRC 0622 / NRRL Y-65 / CBS 138) (Yeast).